Here is a 425-residue protein sequence, read N- to C-terminus: Tyrosine--tRNA ligase (425 aa).

Tyr-37 serves as a coordination point for L-tyrosine. The 'HIGH' region motif lies at 42-51 (PTADSLHLGH). Residues Tyr-174 and Gln-178 each coordinate L-tyrosine. The 'KMSKS' region motif lies at 234–238 (KFGKS). ATP is bound at residue Lys-237. The region spanning 357–422 (DGLIDALAAS…RGKKLYALLV (66 aa)) is the S4 RNA-binding domain.

The protein belongs to the class-I aminoacyl-tRNA synthetase family. TyrS type 1 subfamily. Homodimer.

Its subcellular location is the cytoplasm. It carries out the reaction tRNA(Tyr) + L-tyrosine + ATP = L-tyrosyl-tRNA(Tyr) + AMP + diphosphate + H(+). In terms of biological role, catalyzes the attachment of tyrosine to tRNA(Tyr) in a two-step reaction: tyrosine is first activated by ATP to form Tyr-AMP and then transferred to the acceptor end of tRNA(Tyr). This Laribacter hongkongensis (strain HLHK9) protein is Tyrosine--tRNA ligase.